Here is a 136-residue protein sequence, read N- to C-terminus: MVKILKPGKVALITRGRFAGKKVVILQAIDQGSKSHPFGHAVVAGVERYPLKVTKSMGAKRIARRSRVKPFIKVVNYNHLMPTRYALELDNLKGLITADTFKEPTQRSAARKTVKKTFEEKYQSGKSAWFFTPLRF.

Belongs to the eukaryotic ribosomal protein eL27 family. Component of the large ribosomal subunit (LSU). Mature yeast ribosomes consist of a small (40S) and a large (60S) subunit. The 40S small subunit contains 1 molecule of ribosomal RNA (18S rRNA) and at least 33 different proteins. The large 60S subunit contains 3 rRNA molecules (25S, 5.8S and 5S rRNA) and at least 46 different proteins.

The protein resides in the cytoplasm. It localises to the nucleus. Its function is as follows. Component of the ribosome, a large ribonucleoprotein complex responsible for the synthesis of proteins in the cell. The small ribosomal subunit (SSU) binds messenger RNAs (mRNAs) and translates the encoded message by selecting cognate aminoacyl-transfer RNA (tRNA) molecules. The large subunit (LSU) contains the ribosomal catalytic site termed the peptidyl transferase center (PTC), which catalyzes the formation of peptide bonds, thereby polymerizing the amino acids delivered by tRNAs into a polypeptide chain. The nascent polypeptides leave the ribosome through a tunnel in the LSU and interact with protein factors that function in enzymatic processing, targeting, and the membrane insertion of nascent chains at the exit of the ribosomal tunnel. The sequence is that of Large ribosomal subunit protein eL27A (rpl2701) from Schizosaccharomyces pombe (strain 972 / ATCC 24843) (Fission yeast).